The following is a 358-amino-acid chain: Peptide chain release factor 1 (358 aa).

An N5-methylglutamine modification is found at Gln237.

The protein belongs to the prokaryotic/mitochondrial release factor family. Methylated by PrmC. Methylation increases the termination efficiency of RF1.

It localises to the cytoplasm. Functionally, peptide chain release factor 1 directs the termination of translation in response to the peptide chain termination codons UAG and UAA. In Streptomyces griseus subsp. griseus (strain JCM 4626 / CBS 651.72 / NBRC 13350 / KCC S-0626 / ISP 5235), this protein is Peptide chain release factor 1.